The sequence spans 1962 residues: RNA replication polyprotein (1962 aa).

In terms of domain architecture, Alphavirus-like MT spans 64–261 (YPNGYLPHSH…YEQKLNMEWL (198 aa)). The region spanning 683 to 794 (GDEIPTPSDG…GNHFVGIETY (112 aa)) is the OTU domain. The Fe2OG dioxygenase domain maps to 874 to 963 (DFNCALINFY…RVSITFRKHV (90 aa)). Residues His-892, Asp-894, and His-946 each coordinate Fe cation. Residue Arg-954 participates in 2-oxoglutarate binding. One can recognise a Peptidase C23 domain in the interval 978–1067 (YKNTCLINAF…LRNNHFSVIN (90 aa)). Active-site residues include Cys-982 and His-1062. The region spanning 1122-1297 (NSFLNMTTGI…LIGGQNIEYI (176 aa)) is the (+)RNA virus helicase ATP-binding domain. An ATP-binding site is contributed by 1164–1171 (GFAGSGKS). The 148-residue stretch at 1298–1445 (YSTHRMSRYF…GEKITFNRLN (148 aa)) folds into the (+)RNA virus helicase C-terminal domain. Residues 1739–1846 (DICVESDYEA…LNNLAVCHDF (108 aa)) form the RdRp catalytic domain.

Fe(2+) is required as a cofactor. In terms of processing, specific enzymatic cleavages by the viral protease yield mature proteins.

It carries out the reaction RNA(n) + a ribonucleoside 5'-triphosphate = RNA(n+1) + diphosphate. It catalyses the reaction ATP + H2O = ADP + phosphate + H(+). Functionally, RNA replication polyprotein: RNA-directed RNA polymerase involved in viral RNA replication. In terms of biological role, protease: Thiol protease that cleaves the polyprotein. The sequence is that of RNA replication polyprotein from Citrus (CLBV).